The sequence spans 364 residues: Alanine racemase (364 aa).

The active-site Proton acceptor; specific for D-alanine is the lysine 35. Lysine 35 bears the N6-(pyridoxal phosphate)lysine mark. A substrate-binding site is contributed by arginine 136. The active-site Proton acceptor; specific for L-alanine is tyrosine 261. Methionine 309 contributes to the substrate binding site.

Belongs to the alanine racemase family. Pyridoxal 5'-phosphate serves as cofactor.

The catalysed reaction is L-alanine = D-alanine. It functions in the pathway amino-acid biosynthesis; D-alanine biosynthesis; D-alanine from L-alanine: step 1/1. Its function is as follows. Catalyzes the interconversion of L-alanine and D-alanine. May also act on other amino acids. This Shewanella amazonensis (strain ATCC BAA-1098 / SB2B) protein is Alanine racemase (alr).